A 431-amino-acid chain; its full sequence is Serine hydroxymethyltransferase 2 (431 aa).

Residues Leu131 and 135–137 each bind (6S)-5,6,7,8-tetrahydrofolate; that span reads GHL. At Lys240 the chain carries N6-(pyridoxal phosphate)lysine. A (6S)-5,6,7,8-tetrahydrofolate-binding site is contributed by Glu256.

It belongs to the SHMT family. Homodimer. Pyridoxal 5'-phosphate serves as cofactor.

The protein resides in the cytoplasm. The catalysed reaction is (6R)-5,10-methylene-5,6,7,8-tetrahydrofolate + glycine + H2O = (6S)-5,6,7,8-tetrahydrofolate + L-serine. The protein operates within one-carbon metabolism; tetrahydrofolate interconversion. It participates in amino-acid biosynthesis; glycine biosynthesis; glycine from L-serine: step 1/1. Functionally, catalyzes the reversible interconversion of serine and glycine with tetrahydrofolate (THF) serving as the one-carbon carrier. This reaction serves as the major source of one-carbon groups required for the biosynthesis of purines, thymidylate, methionine, and other important biomolecules. Also exhibits THF-independent aldolase activity toward beta-hydroxyamino acids, producing glycine and aldehydes, via a retro-aldol mechanism. The sequence is that of Serine hydroxymethyltransferase 2 from Vibrio vulnificus (strain CMCP6).